A 190-amino-acid chain; its full sequence is Holliday junction branch migration complex subunit RuvA (190 aa).

The interval 1-64 (MIGRITGTLI…EDAHILYGFA (64 aa)) is domain I. Positions 65 to 137 (TAAERGAFRE…MRGKLGADIG (73 aa)) are domain II. Residues 137–141 (GATAH) are flexible linker. Residues 142–190 (AVPDSQTDILNALLALGYSDKESQAALKKLPEGTGVSEGIRLALKALVR) form a domain III region.

Belongs to the RuvA family. As to quaternary structure, homotetramer. Forms an RuvA(8)-RuvB(12)-Holliday junction (HJ) complex. HJ DNA is sandwiched between 2 RuvA tetramers; dsDNA enters through RuvA and exits via RuvB. An RuvB hexamer assembles on each DNA strand where it exits the tetramer. Each RuvB hexamer is contacted by two RuvA subunits (via domain III) on 2 adjacent RuvB subunits; this complex drives branch migration. In the full resolvosome a probable DNA-RuvA(4)-RuvB(12)-RuvC(2) complex forms which resolves the HJ.

The protein localises to the cytoplasm. Its function is as follows. The RuvA-RuvB-RuvC complex processes Holliday junction (HJ) DNA during genetic recombination and DNA repair, while the RuvA-RuvB complex plays an important role in the rescue of blocked DNA replication forks via replication fork reversal (RFR). RuvA specifically binds to HJ cruciform DNA, conferring on it an open structure. The RuvB hexamer acts as an ATP-dependent pump, pulling dsDNA into and through the RuvAB complex. HJ branch migration allows RuvC to scan DNA until it finds its consensus sequence, where it cleaves and resolves the cruciform DNA. This Bordetella petrii (strain ATCC BAA-461 / DSM 12804 / CCUG 43448) protein is Holliday junction branch migration complex subunit RuvA.